Consider the following 377-residue polypeptide: Nitric oxide reductase FlRd-NAD(+) reductase (377 aa).

Belongs to the FAD-dependent oxidoreductase family. The cofactor is FAD.

It is found in the cytoplasm. The catalysed reaction is 2 reduced [nitric oxide reductase rubredoxin domain] + NAD(+) + H(+) = 2 oxidized [nitric oxide reductase rubredoxin domain] + NADH. It participates in nitrogen metabolism; nitric oxide reduction. Functionally, one of at least two accessory proteins for anaerobic nitric oxide (NO) reductase. Reduces the rubredoxin moiety of NO reductase. The sequence is that of Nitric oxide reductase FlRd-NAD(+) reductase from Escherichia coli (strain K12 / MC4100 / BW2952).